A 460-amino-acid polypeptide reads, in one-letter code: Cysteine--tRNA ligase (460 aa).

Position 28 (cysteine 28) interacts with Zn(2+). The 'HIGH' region motif lies at 30 to 40; sequence NTVYDFCHIGH. Zn(2+) is bound by residues cysteine 209, histidine 234, and glutamate 238. The 'KMSKS' region motif lies at 266 to 270; it reads KMSKS. An ATP-binding site is contributed by lysine 269.

The protein belongs to the class-I aminoacyl-tRNA synthetase family. In terms of assembly, monomer. It depends on Zn(2+) as a cofactor.

The protein resides in the cytoplasm. It carries out the reaction tRNA(Cys) + L-cysteine + ATP = L-cysteinyl-tRNA(Cys) + AMP + diphosphate. The sequence is that of Cysteine--tRNA ligase from Marinomonas sp. (strain MWYL1).